The chain runs to 519 residues: Cytochrome P450 52A10 (519 aa).

Residue cysteine 466 coordinates heme.

It belongs to the cytochrome P450 family. The cofactor is heme.

The protein resides in the membrane. Functionally, together with an NADPH cytochrome P450 the enzyme system catalyzes the terminal hydroxylation as the first step in the assimilation of alkanes and fatty acids. This Candida maltosa (Yeast) protein is Cytochrome P450 52A10 (CYP52A10).